The chain runs to 318 residues: Probable 3-hydroxyisobutyrate dehydrogenase-like 3, mitochondrial (318 aa).

NAD(+)-binding positions include Thr35–Ala64 and Ser129. Lys203 is a catalytic residue. Residue Lys271 participates in NAD(+) binding.

This sequence belongs to the HIBADH-related family. 3-hydroxyisobutyrate dehydrogenase subfamily.

The protein resides in the mitochondrion. The catalysed reaction is 3-hydroxy-2-methylpropanoate + NAD(+) = 2-methyl-3-oxopropanoate + NADH + H(+). It participates in amino-acid degradation; L-valine degradation. This Arabidopsis thaliana (Mouse-ear cress) protein is Probable 3-hydroxyisobutyrate dehydrogenase-like 3, mitochondrial.